A 155-amino-acid chain; its full sequence is Small ribosomal subunit protein uS7cz/uS7cy (155 aa).

The protein belongs to the universal ribosomal protein uS7 family. Part of the 30S ribosomal subunit.

The protein localises to the plastid. It localises to the chloroplast. Its function is as follows. One of the primary rRNA binding proteins, it binds directly to 16S rRNA where it nucleates assembly of the head domain of the 30S subunit. This is Small ribosomal subunit protein uS7cz/uS7cy (rps7-A) from Angiopteris evecta (Mule's foot fern).